The chain runs to 191 residues: Ribonuclease M5 1 (191 aa).

Residues 10–93 (KEVIVVEGKD…AFLTKHDAAP (84 aa)) enclose the Toprim domain. The Mg(2+) site is built by glutamate 16, aspartate 62, and aspartate 64.

Belongs to the ribonuclease M5 family. Mg(2+) is required as a cofactor.

It is found in the cytoplasm. It carries out the reaction Endonucleolytic cleavage of RNA, removing 21 and 42 nucleotides, respectively, from the 5'- and 3'-termini of a 5S-rRNA precursor.. Functionally, required for correct processing of both the 5' and 3' ends of 5S rRNA precursor. Cleaves both sides of a double-stranded region yielding mature 5S rRNA in one step. The chain is Ribonuclease M5 1 from Ligilactobacillus salivarius (strain CECT 5713) (Lactobacillus salivarius).